We begin with the raw amino-acid sequence, 360 residues long: MLVYLAEYLTQFYSGFNVFSYVTFRAILGLLTALIFSLWWGPKMIERLQMLQIGQVVRNDGPESHFSKRGTPTMGGILILAGVFISVLLWGDLASRYVWVVLFVLASFGLIGFIDDYRKVVRKDTKGLIAKWKYILQSLAALVIAFYLYASADLVGETQLVVPFFKDIMPQLGGFFIVLAYFTIVGSSNAVNLTDGLDGLAIMPTVMVAAAFALIAYLSGHVQFANYLHLPYLPGAGELVIVCTAIVGAGLGFLWFNTYPAQVFMGDVGSLALGAALGVIAVLVRQEILLVIMGGVFVMETVSVILQVGSYKLRGQRIFRMAPIHHHYELKGWPEPRVIVRFWIISLFLVLLGLATLKLR.

A run of 10 helical transmembrane segments spans residues 21–41, 74–94, 97–117, 135–155, 168–188, 199–219, 236–256, 263–283, 288–308, and 338–358; these read YVTF…LWWG, MGGI…GDLA, YVWV…IDDY, ILQS…ADLV, IMPQ…VGSS, GLAI…AYLS, AGEL…FLWF, VFMG…IAVL, ILLV…ILQV, and VIVR…ATLK.

The protein belongs to the glycosyltransferase 4 family. MraY subfamily. Mg(2+) is required as a cofactor.

Its subcellular location is the cell inner membrane. The enzyme catalyses UDP-N-acetyl-alpha-D-muramoyl-L-alanyl-gamma-D-glutamyl-meso-2,6-diaminopimeloyl-D-alanyl-D-alanine + di-trans,octa-cis-undecaprenyl phosphate = di-trans,octa-cis-undecaprenyl diphospho-N-acetyl-alpha-D-muramoyl-L-alanyl-D-glutamyl-meso-2,6-diaminopimeloyl-D-alanyl-D-alanine + UMP. The protein operates within cell wall biogenesis; peptidoglycan biosynthesis. Functionally, catalyzes the initial step of the lipid cycle reactions in the biosynthesis of the cell wall peptidoglycan: transfers peptidoglycan precursor phospho-MurNAc-pentapeptide from UDP-MurNAc-pentapeptide onto the lipid carrier undecaprenyl phosphate, yielding undecaprenyl-pyrophosphoryl-MurNAc-pentapeptide, known as lipid I. This is Phospho-N-acetylmuramoyl-pentapeptide-transferase from Shewanella sediminis (strain HAW-EB3).